We begin with the raw amino-acid sequence, 85 residues long: Small ribosomal subunit protein bS16 (85 aa).

Belongs to the bacterial ribosomal protein bS16 family.

The polypeptide is Small ribosomal subunit protein bS16 (Pelobacter propionicus (strain DSM 2379 / NBRC 103807 / OttBd1)).